Consider the following 219-residue polypeptide: Peptide methionine sulfoxide reductase MsrA (219 aa).

The active site involves Cys-58.

The protein belongs to the MsrA Met sulfoxide reductase family.

The enzyme catalyses L-methionyl-[protein] + [thioredoxin]-disulfide + H2O = L-methionyl-(S)-S-oxide-[protein] + [thioredoxin]-dithiol. It carries out the reaction [thioredoxin]-disulfide + L-methionine + H2O = L-methionine (S)-S-oxide + [thioredoxin]-dithiol. Has an important function as a repair enzyme for proteins that have been inactivated by oxidation. Catalyzes the reversible oxidation-reduction of methionine sulfoxide in proteins to methionine. In Ectopseudomonas mendocina (strain ymp) (Pseudomonas mendocina), this protein is Peptide methionine sulfoxide reductase MsrA.